Reading from the N-terminus, the 323-residue chain is Serine racemase (323 aa).

ATP-binding residues include S32, S33, and K52. K57 acts as the Proton acceptor in catalysis. K57 carries the post-translational modification Lysino-D-alanine (Lys); alternate. Residue K57 is modified to N6-(pyridoxal phosphate)lysine; alternate. T79 is a Ca(2+) binding site. The active-site Proton acceptor is the S82. Position 84 (N84) interacts with pyridoxal 5'-phosphate. ATP contacts are provided by Q87 and Y119. D176 lines the Mg(2+) pocket. Pyridoxal 5'-phosphate-binding residues include G183, G184, G185, G186, and L187. The Ca(2+) site is built by E208, G212, and D214. Mg(2+)-binding residues include E208, G212, and D214. Residues E208, G212, and D214 each coordinate Mn(2+). K277 contacts ATP. S308 is a pyridoxal 5'-phosphate binding site. Position 311 (N311) interacts with ATP.

The protein belongs to the serine/threonine dehydratase family. As to quaternary structure, homodimer. Mg(2+) serves as cofactor. Requires Mn(2+) as cofactor. It depends on Ca(2+) as a cofactor. Pyridoxal 5'-phosphate is required as a cofactor. Modification of the active site Lys by its substrate Ser to lysino-D-alanine reduces but does not abolish enzyme activity.

It carries out the reaction L-serine = D-serine. It catalyses the reaction L-serine = pyruvate + NH4(+). The enzyme catalyses D-serine = pyruvate + NH4(+). With respect to regulation, allosterically activated by ATP, by magnesium, and possibly also by other divalent metal cations. Functionally, catalyzes the synthesis of D-serine from L-serine. Has dehydratase activity towards both L-serine and D-serine. This is Serine racemase from Schizosaccharomyces pombe (strain 972 / ATCC 24843) (Fission yeast).